The following is a 466-amino-acid chain: Cysteine--tRNA ligase (466 aa).

Cys-28 contacts Zn(2+). The 'HIGH' region signature appears at 30-40 (PTVYNYIHIGN). Cys-208, His-233, and Glu-237 together coordinate Zn(2+). The 'KMSKS' region motif lies at 265–269 (KMSKS). Lys-268 is an ATP binding site.

The protein belongs to the class-I aminoacyl-tRNA synthetase family. In terms of assembly, monomer. The cofactor is Zn(2+).

The protein localises to the cytoplasm. The catalysed reaction is tRNA(Cys) + L-cysteine + ATP = L-cysteinyl-tRNA(Cys) + AMP + diphosphate. In Staphylococcus aureus (strain USA300), this protein is Cysteine--tRNA ligase.